Reading from the N-terminus, the 899-residue chain is Pre-mRNA-splicing factor 6 (899 aa).

The segment at 1–65 (MERPSFLDQE…QSQPKDDEDD (65 aa)) is disordered. The span at 28–51 (TKEKQVVSNDDKGRRIPKRYRENL) shows a compositional bias: basic and acidic residues. HAT repeat units follow at residues 221–253 (EDLQ…LEEK), 255–287 (RKFS…LHES), 289–318 (VHYC…DLES), 319–350 (TTVN…FEAD), 352–381 (AQVI…LQSY), 383–414 (NAKM…RNNP), 493–525 (PHSK…ATES), 545–578 (NSDD…DTRQ), 608–645 (LQLD…FLRY), 648–680 (LNEE…IYHS), 682–714 (GNIE…IDEI), 751–783 (GNLD…LFKH), and 819–851 (AQYE…TYAR).

Component of the U4/U6-U5 tri-snRNP complex composed of the U4, U6 and U5 snRNAs and at least PRP3, PRP4, PRP6, PRP8, PRP18, PRP31, PRP38, SNU13, SNU23, SNU66, SNU114, SPP381, SMB1, SMD1, SMD2, SMD3, SMX2, SMX3, LSM2, LSM3, LSM4, LSM5, LSM6, LSM7, LSM8, BRR2 and DIB1.

The protein resides in the nucleus. In terms of biological role, participates in pre-mRNA splicing. Part of the U4/U5/U6 tri-snRNP complex, one of the building blocks of the spliceosome. In Saccharomyces cerevisiae (strain ATCC 204508 / S288c) (Baker's yeast), this protein is Pre-mRNA-splicing factor 6 (PRP6).